The primary structure comprises 382 residues: Regulatory protein RapC (382 aa).

TPR repeat units follow at residues 102 to 138, 149 to 182, 183 to 216, 223 to 256, and 263 to 296; these read YYVNFFRGMYEFDKREFISAITYYKQAEKKLSFVADH, AEAYYYMKQTYFSLINIKNAYEIYVEQETYNVRI, IQCHFVFGVNLMDERNFEQAARHFKLALNMAQAE, GRAYYNLGLCYYNQDLLDPAIDYFEKAVSTFESS, and PQAYFLITLIYYKQGKHDKASEYHKRGYEYAKET.

Belongs to the Rap family. As to quaternary structure, homodimer. Interacts specifically with the C-terminal DNA-binding domain of ComA. Interacts with CSF.

The protein resides in the cytoplasm. With respect to regulation, inhibited by the competence and sporulation stimulating factor (CSF), encoded by phrC, which prevents RapC-ComA interaction. Its function is as follows. Involved in the regulation of genetic competence development. Inhibits the activity of ComA, a transcriptional factor that regulates the development of genetic competence. Acts by binding to ComA, independently of its phosphorylation state, leading to the inhibition of ComA DNA-binding activity. Does not dephosphorylate phospho-ComA and does not affect the phosphorylation level of the ComP-ComA system. This is Regulatory protein RapC (rapC) from Bacillus subtilis (strain 168).